We begin with the raw amino-acid sequence, 51 residues long: Large ribosomal subunit protein eL39 (51 aa).

The protein belongs to the eukaryotic ribosomal protein eL39 family.

In Sulfurisphaera tokodaii (strain DSM 16993 / JCM 10545 / NBRC 100140 / 7) (Sulfolobus tokodaii), this protein is Large ribosomal subunit protein eL39.